A 209-amino-acid chain; its full sequence is Large ribosomal subunit protein uL3 (209 aa).

The protein belongs to the universal ribosomal protein uL3 family. Part of the 50S ribosomal subunit. Forms a cluster with proteins L14 and L19.

One of the primary rRNA binding proteins, it binds directly near the 3'-end of the 23S rRNA, where it nucleates assembly of the 50S subunit. This Nitratidesulfovibrio vulgaris (strain DSM 19637 / Miyazaki F) (Desulfovibrio vulgaris) protein is Large ribosomal subunit protein uL3.